Here is a 329-residue protein sequence, read N- to C-terminus: Aspartate carbamoyltransferase catalytic subunit (329 aa).

Residues arginine 66 and threonine 67 each contribute to the carbamoyl phosphate site. Lysine 94 serves as a coordination point for L-aspartate. The carbamoyl phosphate site is built by arginine 116, histidine 149, and glutamine 152. L-aspartate is bound by residues arginine 189 and arginine 243. Residues glycine 284 and proline 285 each contribute to the carbamoyl phosphate site.

It belongs to the aspartate/ornithine carbamoyltransferase superfamily. ATCase family. As to quaternary structure, heterododecamer (2C3:3R2) of six catalytic PyrB chains organized as two trimers (C3), and six regulatory PyrI chains organized as three dimers (R2).

It carries out the reaction carbamoyl phosphate + L-aspartate = N-carbamoyl-L-aspartate + phosphate + H(+). Its pathway is pyrimidine metabolism; UMP biosynthesis via de novo pathway; (S)-dihydroorotate from bicarbonate: step 2/3. Catalyzes the condensation of carbamoyl phosphate and aspartate to form carbamoyl aspartate and inorganic phosphate, the committed step in the de novo pyrimidine nucleotide biosynthesis pathway. The sequence is that of Aspartate carbamoyltransferase catalytic subunit from Gloeobacter violaceus (strain ATCC 29082 / PCC 7421).